Consider the following 386-residue polypeptide: MMVRKSTASNRRLQDKGDEEPVATVPKCREAILSIKPYVPGKPIEEVQRELGVKDVIKLASNENPLGPSPDAVQALQEASDRIFLYPDGNCYYLKEALAAKLGVKQENLIIGNGTDEILKMLAETYINPGDEIVVADPTFSEYEFAAQVMGGRAIKVPTRNFRHDLAAMAAAITPRTRLVFVCNPNNPTGTIVGQAALDGFLKQVPPSVLVVLDEAYSDYVTAEHYPNSLAYVRAGRANVIILRTFSKIYGLAGLRVGYGVAVPEIIRDLNRVREPFNVNLLAQVAAVAALKDEAHVGKSREVNSEGKDYLYSQFESLGLKYVPTEANFIFVDIQRDSREVFRQLLQKGVIVRTGDIFGYDTFLRVTIGTRRQNETFIRALREILA.

A compositionally biased stretch (polar residues) spans 1–11 (MMVRKSTASNR). The tract at residues 1–22 (MMVRKSTASNRRLQDKGDEEPV) is disordered. The residue at position 248 (Lys248) is an N6-(pyridoxal phosphate)lysine.

Belongs to the class-II pyridoxal-phosphate-dependent aminotransferase family. Histidinol-phosphate aminotransferase subfamily. Homodimer. It depends on pyridoxal 5'-phosphate as a cofactor.

It carries out the reaction L-histidinol phosphate + 2-oxoglutarate = 3-(imidazol-4-yl)-2-oxopropyl phosphate + L-glutamate. Its pathway is amino-acid biosynthesis; L-histidine biosynthesis; L-histidine from 5-phospho-alpha-D-ribose 1-diphosphate: step 7/9. The sequence is that of Histidinol-phosphate aminotransferase from Moorella thermoacetica (strain ATCC 39073 / JCM 9320).